The following is a 92-amino-acid chain: Probable Fe(2+)-trafficking protein (92 aa).

This sequence belongs to the Fe(2+)-trafficking protein family.

Its function is as follows. Could be a mediator in iron transactions between iron acquisition and iron-requiring processes, such as synthesis and/or repair of Fe-S clusters in biosynthetic enzymes. The protein is Probable Fe(2+)-trafficking protein of Anaeromyxobacter sp. (strain Fw109-5).